Consider the following 215-residue polypeptide: Large ribosomal subunit protein uL16 (215 aa).

The protein belongs to the universal ribosomal protein uL16 family. In terms of assembly, component of the large ribosomal subunit.

The protein localises to the cytoplasm. Functionally, component of the large ribosomal subunit. Plays a role in the formation of actively translating ribosomes. Plays a role in the embryonic brain development. This Danio rerio (Zebrafish) protein is Large ribosomal subunit protein uL16.